Reading from the N-terminus, the 240-residue chain is ATP-dependent dethiobiotin synthetase BioD (240 aa).

15 to 20 (EIGKTF) provides a ligand contact to ATP. Thr-19 is a Mg(2+) binding site. Lys-40 is an active-site residue. Residues Asp-57, 118 to 121 (EGVG), and 178 to 179 (NR) each bind ATP. Residues Asp-57 and Glu-118 each contribute to the Mg(2+) site.

Belongs to the dethiobiotin synthetase family. Homodimer. Mg(2+) is required as a cofactor.

The protein resides in the cytoplasm. It catalyses the reaction (7R,8S)-7,8-diammoniononanoate + CO2 + ATP = (4R,5S)-dethiobiotin + ADP + phosphate + 3 H(+). Its pathway is cofactor biosynthesis; biotin biosynthesis; biotin from 7,8-diaminononanoate: step 1/2. Functionally, catalyzes a mechanistically unusual reaction, the ATP-dependent insertion of CO2 between the N7 and N8 nitrogen atoms of 7,8-diaminopelargonic acid (DAPA, also called 7,8-diammoniononanoate) to form a ureido ring. The protein is ATP-dependent dethiobiotin synthetase BioD of Burkholderia mallei (strain NCTC 10247).